The sequence spans 253 residues: 5-oxoprolinase subunit A (253 aa).

This sequence belongs to the LamB/PxpA family. Forms a complex composed of PxpA, PxpB and PxpC.

It catalyses the reaction 5-oxo-L-proline + ATP + 2 H2O = L-glutamate + ADP + phosphate + H(+). Its function is as follows. Catalyzes the cleavage of 5-oxoproline to form L-glutamate coupled to the hydrolysis of ATP to ADP and inorganic phosphate. The polypeptide is 5-oxoprolinase subunit A (Syntrophobacter fumaroxidans (strain DSM 10017 / MPOB)).